A 158-amino-acid polypeptide reads, in one-letter code: NAD(P)H-quinone oxidoreductase subunit J, chloroplastic (158 aa).

Belongs to the complex I 30 kDa subunit family. As to quaternary structure, NDH is composed of at least 16 different subunits, 5 of which are encoded in the nucleus.

Its subcellular location is the plastid. The protein resides in the chloroplast thylakoid membrane. The catalysed reaction is a plastoquinone + NADH + (n+1) H(+)(in) = a plastoquinol + NAD(+) + n H(+)(out). The enzyme catalyses a plastoquinone + NADPH + (n+1) H(+)(in) = a plastoquinol + NADP(+) + n H(+)(out). Its function is as follows. NDH shuttles electrons from NAD(P)H:plastoquinone, via FMN and iron-sulfur (Fe-S) centers, to quinones in the photosynthetic chain and possibly in a chloroplast respiratory chain. The immediate electron acceptor for the enzyme in this species is believed to be plastoquinone. Couples the redox reaction to proton translocation, and thus conserves the redox energy in a proton gradient. This is NAD(P)H-quinone oxidoreductase subunit J, chloroplastic from Vitis vinifera (Grape).